The chain runs to 195 residues: A-type ATP synthase subunit E (195 aa).

The protein belongs to the V-ATPase E subunit family. Has multiple subunits with at least A(3), B(3), C, D, E, F, H, I and proteolipid K(x).

It is found in the cell membrane. In terms of biological role, component of the A-type ATP synthase that produces ATP from ADP in the presence of a proton gradient across the membrane. This Halobacterium salinarum (strain ATCC 29341 / DSM 671 / R1) protein is A-type ATP synthase subunit E.